A 424-amino-acid chain; its full sequence is Hydrolase ORFZ (424 aa).

Ser243 (nucleophile) is an active-site residue.

Belongs to the AB hydrolase superfamily. FUS2 hydrolase family. As to quaternary structure, homodimer.

It functions in the pathway secondary metabolite biosynthesis. In terms of biological role, hydrolyase; part of the gene cluster that mediates the biosynthesis of a tyrosine-derived cytochalasan acting as a fungal signal recognized by resistant rice plants and leads to avirulence in Pi33 resistant rice cultivars. The first step in the pathway is catalyzed by the hybrid PKS-NRPS ACE1, assisted by the enoyl reductase RAP1, that are responsible for fusion of the tyrosine precursor and the polyketide backbone. The polyketide synthase module (PKS) of ACE1 is responsible for the synthesis of the polyketide backbone and the downstream nonribosomal peptide synthetase (NRPS) amidates the carboxyl end of the polyketide with the tyrosine precursor. Because ACE1 lacks a designated enoylreductase (ER) domain, the required activity is provided the enoyl reductase RAP1. Reduction by the hydrolyase ORFZ, followed by dehydration and intra-molecular Diels-Alder cyclization by the Diels-Alderase ORF3 then yield the required isoindolone-fused macrocycle. A number of oxidative steps catalyzed by the tailoring enzymes identified within the cluster, including cytochrome P450 monooxygenases CYP1 to CYP4, the FAD-linked oxidoreductase OXR2 and the short-chain dehydrogenase/reductase OXR1, are further required to afford the final cytochalasans that confer avirulence and which have still to be identified. The monooxygenase CYP1 has been shown to be a site-selective C-18 hydroxylase whereas the function of CYP3 is the site-selective epoxidation of the C-6/C-7 olefin that is present in some intermediate compounds. Finally, SYN2 and RAP2 are not required for avirulence in Pi33 resistant rice cultivars. In Pyricularia oryzae (strain 70-15 / ATCC MYA-4617 / FGSC 8958) (Rice blast fungus), this protein is Hydrolase ORFZ.